A 1040-amino-acid chain; its full sequence is Multidrug resistance protein MdtB (1040 aa).

12 consecutive transmembrane segments (helical) span residues 25 to 45, 347 to 367, 369 to 389, 396 to 416, 440 to 460, 472 to 492, 537 to 557, 863 to 883, 888 to 908, 911 to 931, 968 to 988, and 998 to 1018; these read LLMVAILLAGIIGYQALPVSA, LMMAIALVVMIIYLFLRNIPA, IIPGVAVPLSLIGTFAVMVFL, LTLMALTIATGFVVDDAIVVI, IGFTIISLTFSLIAVLIPLLF, FAITLAVAILISAVVSLTLTP, WLTLSVALSTLLLSVLLWVFI, LGSTVWLIVAAVVAMYIVLGI, FIHPITILSTLPTAGVGALLA, IAGSELDVIAIIGIILLIGIV, ILMTTLAALLGALPLMLSTGV, and IGMVGGLIVSQVLTLFTTPVI.

It belongs to the resistance-nodulation-cell division (RND) (TC 2.A.6) family. MdtB subfamily. In terms of assembly, part of a tripartite efflux system composed of MdtA, MdtB and MdtC. MdtB forms a heteromultimer with MdtC.

The protein resides in the cell inner membrane. Functionally, the MdtABC tripartite complex confers resistance against novobiocin and deoxycholate. In Escherichia coli O127:H6 (strain E2348/69 / EPEC), this protein is Multidrug resistance protein MdtB.